A 92-amino-acid polypeptide reads, in one-letter code: Small ribosomal subunit protein uS19c (92 aa).

It belongs to the universal ribosomal protein uS19 family.

The protein localises to the plastid. Its subcellular location is the chloroplast. Functionally, protein S19 forms a complex with S13 that binds strongly to the 16S ribosomal RNA. The protein is Small ribosomal subunit protein uS19c (rps19) of Glycine max (Soybean).